Here is a 101-residue protein sequence, read N- to C-terminus: Small ribosomal subunit protein uS14 (101 aa).

This sequence belongs to the universal ribosomal protein uS14 family. In terms of assembly, part of the 30S ribosomal subunit. Contacts proteins S3 and S10.

Functionally, binds 16S rRNA, required for the assembly of 30S particles and may also be responsible for determining the conformation of the 16S rRNA at the A site. The sequence is that of Small ribosomal subunit protein uS14 from Paenarthrobacter aurescens (strain TC1).